Consider the following 148-residue polypeptide: Transcriptional regulator MraZ (148 aa).

2 SpoVT-AbrB domains span residues 5–53 and 82–125; these read ETAI…VEKE and SALL…SEQA.

This sequence belongs to the MraZ family. As to quaternary structure, forms oligomers.

It is found in the cytoplasm. The protein resides in the nucleoid. The polypeptide is Transcriptional regulator MraZ (Xylella fastidiosa (strain Temecula1 / ATCC 700964)).